The following is a 55-amino-acid chain: Large ribosomal subunit protein bL33 (55 aa).

This sequence belongs to the bacterial ribosomal protein bL33 family.

The chain is Large ribosomal subunit protein bL33 from Buchnera aphidicola subsp. Schizaphis graminum (strain Sg).